The primary structure comprises 516 residues: Apolipoprotein N-acyltransferase (516 aa).

A run of 5 helical transmembrane segments spans residues 23–43, 68–88, 94–114, 135–155, and 178–198; these read ILIL…AFAP, AFWL…RWIY, VAGL…AYLA, WLLA…WVMT, and LGGI…LAML. Residues 241 to 481 form the CN hydrolase domain; the sequence is AQGNIAQELK…VLTGFAQSRQ (241 aa). Glu279 acts as the Proton acceptor in catalysis. Lys339 is a catalytic residue. Cys391 (nucleophile) is an active-site residue. Residues 489–509 form a helical membrane-spanning segment; sequence FGNLPVVLGCGALLLLALLLG.

It belongs to the CN hydrolase family. Apolipoprotein N-acyltransferase subfamily.

It is found in the cell inner membrane. It catalyses the reaction N-terminal S-1,2-diacyl-sn-glyceryl-L-cysteinyl-[lipoprotein] + a glycerophospholipid = N-acyl-S-1,2-diacyl-sn-glyceryl-L-cysteinyl-[lipoprotein] + a 2-acyl-sn-glycero-3-phospholipid + H(+). It functions in the pathway protein modification; lipoprotein biosynthesis (N-acyl transfer). In terms of biological role, catalyzes the phospholipid dependent N-acylation of the N-terminal cysteine of apolipoprotein, the last step in lipoprotein maturation. The chain is Apolipoprotein N-acyltransferase from Chromobacterium violaceum (strain ATCC 12472 / DSM 30191 / JCM 1249 / CCUG 213 / NBRC 12614 / NCIMB 9131 / NCTC 9757 / MK).